Reading from the N-terminus, the 308-residue chain is Phosphoribosylaminoimidazole-succinocarboxamide synthase (308 aa).

It belongs to the SAICAR synthetase family.

The enzyme catalyses 5-amino-1-(5-phospho-D-ribosyl)imidazole-4-carboxylate + L-aspartate + ATP = (2S)-2-[5-amino-1-(5-phospho-beta-D-ribosyl)imidazole-4-carboxamido]succinate + ADP + phosphate + 2 H(+). Its pathway is purine metabolism; IMP biosynthesis via de novo pathway; 5-amino-1-(5-phospho-D-ribosyl)imidazole-4-carboxamide from 5-amino-1-(5-phospho-D-ribosyl)imidazole-4-carboxylate: step 1/2. This chain is Phosphoribosylaminoimidazole-succinocarboxamide synthase, found in Xanthomonas euvesicatoria pv. vesicatoria (strain 85-10) (Xanthomonas campestris pv. vesicatoria).